The primary structure comprises 1427 residues: DNA-directed RNA polymerase subunit beta' (1427 aa).

Zn(2+) contacts are provided by Cys70, Cys72, Cys85, and Cys88. Asp461, Asp463, and Asp465 together coordinate Mg(2+). Cys809, Cys882, Cys889, and Cys892 together coordinate Zn(2+). The interval 1394–1427 is disordered; sequence EAAIGDDPLGKVQGEDFTTDDVMVEERPEGASEE. A compositionally biased stretch (basic and acidic residues) spans 1417–1427; that stretch reads VEERPEGASEE.

It belongs to the RNA polymerase beta' chain family. In terms of assembly, the RNAP catalytic core consists of 2 alpha, 1 beta, 1 beta' and 1 omega subunit. When a sigma factor is associated with the core the holoenzyme is formed, which can initiate transcription. Requires Mg(2+) as cofactor. It depends on Zn(2+) as a cofactor.

It carries out the reaction RNA(n) + a ribonucleoside 5'-triphosphate = RNA(n+1) + diphosphate. Its function is as follows. DNA-dependent RNA polymerase catalyzes the transcription of DNA into RNA using the four ribonucleoside triphosphates as substrates. The sequence is that of DNA-directed RNA polymerase subunit beta' from Sphingopyxis alaskensis (strain DSM 13593 / LMG 18877 / RB2256) (Sphingomonas alaskensis).